A 111-amino-acid chain; its full sequence is UPF0122 protein CKR_1296 (111 aa).

This sequence belongs to the UPF0122 family.

Might take part in the signal recognition particle (SRP) pathway. This is inferred from the conservation of its genetic proximity to ftsY/ffh. May be a regulatory protein. The protein is UPF0122 protein CKR_1296 of Clostridium kluyveri (strain NBRC 12016).